A 125-amino-acid polypeptide reads, in one-letter code: Large ribosomal subunit protein bL12 (125 aa).

It belongs to the bacterial ribosomal protein bL12 family. In terms of assembly, homodimer. Part of the ribosomal stalk of the 50S ribosomal subunit. Forms a multimeric L10(L12)X complex, where L10 forms an elongated spine to which 2 to 4 L12 dimers bind in a sequential fashion. Binds GTP-bound translation factors.

Forms part of the ribosomal stalk which helps the ribosome interact with GTP-bound translation factors. Is thus essential for accurate translation. In Campylobacter curvus (strain 525.92), this protein is Large ribosomal subunit protein bL12.